The primary structure comprises 881 residues: DNA mismatch repair protein MutS (881 aa).

605–612 contributes to the ATP binding site; that stretch reads GPNMSGKS.

It belongs to the DNA mismatch repair MutS family.

Its function is as follows. This protein is involved in the repair of mismatches in DNA. It is possible that it carries out the mismatch recognition step. This protein has a weak ATPase activity. The chain is DNA mismatch repair protein MutS from Limosilactobacillus reuteri subsp. reuteri (strain JCM 1112) (Lactobacillus reuteri).